We begin with the raw amino-acid sequence, 525 residues long: GMP synthase [glutamine-hydrolyzing] (525 aa).

The region spanning 9–207 is the Glutamine amidotransferase type-1 domain; it reads RILILDFGSQ…VRDICQCEAL (199 aa). Catalysis depends on cysteine 86, which acts as the Nucleophile. Active-site residues include histidine 181 and glutamate 183. The 193-residue stretch at 208-400 folds into the GMPS ATP-PPase domain; sequence WTPAKIIDDA…LGLPYDMLYR (193 aa). 235 to 241 serves as a coordination point for ATP; the sequence is SGGVDSS.

As to quaternary structure, homodimer.

The catalysed reaction is XMP + L-glutamine + ATP + H2O = GMP + L-glutamate + AMP + diphosphate + 2 H(+). Its pathway is purine metabolism; GMP biosynthesis; GMP from XMP (L-Gln route): step 1/1. Functionally, catalyzes the synthesis of GMP from XMP. This Klebsiella pneumoniae (strain 342) protein is GMP synthase [glutamine-hydrolyzing].